The chain runs to 184 residues: Ribosome-recycling factor (184 aa).

A disordered region spans residues 137 to 158 (DSIKAKQKDGIPEDEAKRGQDE).

It belongs to the RRF family.

It is found in the cytoplasm. Its function is as follows. Responsible for the release of ribosomes from messenger RNA at the termination of protein biosynthesis. May increase the efficiency of translation by recycling ribosomes from one round of translation to another. In Desulforamulus reducens (strain ATCC BAA-1160 / DSM 100696 / MI-1) (Desulfotomaculum reducens), this protein is Ribosome-recycling factor.